Here is a 268-residue protein sequence, read N- to C-terminus: Indole-3-glycerol phosphate synthase (268 aa).

This sequence belongs to the TrpC family.

It carries out the reaction 1-(2-carboxyphenylamino)-1-deoxy-D-ribulose 5-phosphate + H(+) = (1S,2R)-1-C-(indol-3-yl)glycerol 3-phosphate + CO2 + H2O. Its pathway is amino-acid biosynthesis; L-tryptophan biosynthesis; L-tryptophan from chorismate: step 4/5. The polypeptide is Indole-3-glycerol phosphate synthase (Acinetobacter baumannii (strain ACICU)).